The following is a 263-amino-acid chain: Endonuclease 8 (263 aa).

The active-site Schiff-base intermediate with DNA is proline 2. Glutamate 3 acts as the Proton donor in catalysis. Catalysis depends on lysine 53, which acts as the Proton donor; for beta-elimination activity. DNA is bound by residues glutamine 70, arginine 125, and asparagine 169. An FPG-type zinc finger spans residues 229–263 (KVFHRDGELCERCGGIIEKTTLSSRPFYWCPGCQH). The Proton donor; for delta-elimination activity role is filled by arginine 253.

The protein belongs to the FPG family. It depends on Zn(2+) as a cofactor.

It catalyses the reaction 2'-deoxyribonucleotide-(2'-deoxyribose 5'-phosphate)-2'-deoxyribonucleotide-DNA = a 3'-end 2'-deoxyribonucleotide-(2,3-dehydro-2,3-deoxyribose 5'-phosphate)-DNA + a 5'-end 5'-phospho-2'-deoxyribonucleoside-DNA + H(+). Its function is as follows. Involved in base excision repair of DNA damaged by oxidation or by mutagenic agents. Acts as a DNA glycosylase that recognizes and removes damaged bases. Has a preference for oxidized pyrimidines, such as thymine glycol, 5,6-dihydrouracil and 5,6-dihydrothymine. Has AP (apurinic/apyrimidinic) lyase activity and introduces nicks in the DNA strand. Cleaves the DNA backbone by beta-delta elimination to generate a single-strand break at the site of the removed base with both 3'- and 5'-phosphates. This Shigella flexneri serotype 5b (strain 8401) protein is Endonuclease 8.